A 273-amino-acid chain; its full sequence is Soluble P-type ATPase-like phosphatase (273 aa).

Asp8 functions as the 4-aspartylphosphate intermediate in the catalytic mechanism.

The protein belongs to the cation transport ATPase (P-type) (TC 3.A.3) family. Type IB subfamily. Requires Mg(2+) as cofactor.

With respect to regulation, inhibited by orthovanadate. In terms of biological role, most probably acts as a phosphatase in the cytosol. In Methanocaldococcus jannaschii (strain ATCC 43067 / DSM 2661 / JAL-1 / JCM 10045 / NBRC 100440) (Methanococcus jannaschii), this protein is Soluble P-type ATPase-like phosphatase (patS).